The primary structure comprises 253 residues: Exosome complex component Rrp4 (253 aa).

The 74-residue stretch at 80 to 153 (GDIVIGIVVD…SRGPILTVQD (74 aa)) folds into the S1 motif domain.

Belongs to the RRP4 family. As to quaternary structure, component of the archaeal exosome complex. Forms a trimer of Rrp4 and/or Csl4 subunits. The trimer associates with a hexameric ring-like arrangement composed of 3 Rrp41-Rrp42 heterodimers.

The protein resides in the cytoplasm. Non-catalytic component of the exosome, which is a complex involved in RNA degradation. Increases the RNA binding and the efficiency of RNA degradation. Confers strong poly(A) specificity to the exosome. This chain is Exosome complex component Rrp4, found in Ignisphaera aggregans (strain DSM 17230 / JCM 13409 / AQ1.S1).